The sequence spans 150 residues: Single-stranded DNA-binding protein 1 (150 aa).

The SSB domain maps to 1-104 (MINNVVLVGR…VVADTFQMLE (104 aa)). A compositionally biased stretch (polar residues) spans 103 to 120 (LESNKTQGQQTSKPQAQN). Residues 103–150 (LESNKTQGQQTSKPQAQNKKPQAPDPFKAPAADPFAGGTEISDDDLPF) are disordered. The span at 121 to 138 (KKPQAPDPFKAPAADPFA) shows a compositional bias: low complexity. An Important for interaction with partner proteins motif is present at residues 145 to 150 (DDDLPF).

As to quaternary structure, homotetramer.

Plays an important role in DNA replication, recombination and repair. Binds to ssDNA and to an array of partner proteins to recruit them to their sites of action during DNA metabolism. The sequence is that of Single-stranded DNA-binding protein 1 (ssb1) from Lactococcus lactis subsp. lactis (strain IL1403) (Streptococcus lactis).